A 69-amino-acid chain; its full sequence is Putative membrane protein insertion efficiency factor (69 aa).

This sequence belongs to the UPF0161 family.

It is found in the cell membrane. Functionally, could be involved in insertion of integral membrane proteins into the membrane. The chain is Putative membrane protein insertion efficiency factor from Alkaliphilus oremlandii (strain OhILAs) (Clostridium oremlandii (strain OhILAs)).